Reading from the N-terminus, the 537-residue chain is Di/tripeptide-binding protein 1 (537 aa).

An N-terminal signal peptide occupies residues 1–29 (MRRNAVIRSAIMPSLLGAALVAAVPQAFA).

It belongs to the bacterial solute-binding protein 5 family. In terms of assembly, the complex is composed of two ATP-binding proteins (DppD and DppF), two transmembrane proteins (DppB and DppC) and a solute-binding protein (DppA1). Five orthologous SBPs (DppA1-A5) are present in P.aeruginosa, which increases the substrate specificity of the DppBCDF transporter.

Its function is as follows. Part of the ABC transporter DppABCDF involved in the uptake of various di/tripeptides. Prefers dipeptides with acidic residues at the C-terminal end. Involved in the uptake of phaseolotoxin, a toxic tripeptide inhibiting the enzyme ornithine carbamoyltransferase. This is Di/tripeptide-binding protein 1 from Pseudomonas aeruginosa (strain UCBPP-PA14).